The sequence spans 130 residues: Small ribosomal subunit protein uS8 (130 aa).

It belongs to the universal ribosomal protein uS8 family. Part of the 30S ribosomal subunit. Contacts proteins S5 and S12.

Functionally, one of the primary rRNA binding proteins, it binds directly to 16S rRNA central domain where it helps coordinate assembly of the platform of the 30S subunit. This chain is Small ribosomal subunit protein uS8, found in Alteromonas mediterranea (strain DSM 17117 / CIP 110805 / LMG 28347 / Deep ecotype).